The primary structure comprises 320 residues: Olfactory receptor 51E2 (320 aa).

Topologically, residues 1 to 24 (MSSCNFTHATFVLIGIPGLEKAHF) are extracellular. An N-linked (GlcNAc...) asparagine glycan is attached at asparagine 5. Residues 25–45 (WVGFPLLSMYVVAMFGNCIVV) form a helical membrane-spanning segment. The Cytoplasmic portion of the chain corresponds to 46–53 (FIVRTERS). The chain crosses the membrane as a helical span at residues 54–74 (LHAPMYLFLCMLAAIDLALST). The Extracellular segment spans residues 75–98 (STMPKILALFWFDSREISFEACLT). A disulfide bridge connects residues cysteine 96 and cysteine 178. Residues 99–119 (QMFFIHALSAIESTILLAMAF) traverse the membrane as a helical segment. Residues 120-138 (DRYVAICHPLRHAAVLNNT) lie on the Cytoplasmic side of the membrane. A helical membrane pass occupies residues 139 to 159 (VTAQIGIVAVVRGSLFFFPLP). Residues 160–195 (LLIKRLAFCHSNVLSHSYCVHQDVMKLAYADTLPNV) are Extracellular-facing. A helical membrane pass occupies residues 196–216 (VYGLTAILLVMGVDVMFISLS). Residues 217-236 (YFLIIRTVLQLPSKSERAKA) lie on the Cytoplasmic side of the membrane. The chain crosses the membrane as a helical span at residues 237-257 (FGTCVSHIGVVLAFYVPLIGL). The Extracellular portion of the chain corresponds to 258–272 (SVVHRFGNSLHPIVR). A helical transmembrane segment spans residues 273–293 (VVMGDIYLLLPPVINPIIYGA). Residues 294 to 320 (KTKQIRTRVLAMFKISCDKDLQAVGGK) are Cytoplasmic-facing.

It belongs to the G-protein coupled receptor 1 family. In terms of tissue distribution, highly expressed in the prostate. Also expressed in spleen, liver, olfactory epithelium, retinal pigment epithelium and medulla oblongata. In the retinal pigment epithelium expression is restricted to the pigment cells and choroid (at protein level). Expressed in epidermal melanocytes (at protein level).

The protein localises to the cell membrane. It localises to the early endosome membrane. Its function is as follows. Olfactory receptor. Activated by the odorant, beta-ionone, a synthetic terpenoid. The activity of this receptor is probably mediated by G-proteins leading to the elevation of intracellular Ca(2+), cAMP and activation of the protein kinases PKA and MAPK3/MAPK1. Stimulation of OR51E2 by beta-ionone affects melanocyte proliferation, differentiation, and melanogenesis. Activation of OR51E2 by beta-ionone increases proliferation and migration of primary retinal pigment epithelial (RPE) cells. Activated also by the short-chain fatty acids (SCFA) acetate and propionate. In response to SCFA, may positively regulate renin secretion and increase blood pressure. May also be activated by steroid hormones and regulate cell proliferation. Activated by L-lactate in glomus cells. The sequence is that of Olfactory receptor 51E2 from Homo sapiens (Human).